A 235-amino-acid polypeptide reads, in one-letter code: Octanoyltransferase (235 aa).

One can recognise a BPL/LPL catalytic domain in the interval 52-229 (KNRQASMIFC…SICSALEYIN (178 aa)). Substrate contacts are provided by residues 89-96 (RGGKITWH), 159-161 (AIG), and 172-174 (GFA). Catalysis depends on C190, which acts as the Acyl-thioester intermediate.

The protein belongs to the LipB family.

It localises to the cytoplasm. It carries out the reaction octanoyl-[ACP] + L-lysyl-[protein] = N(6)-octanoyl-L-lysyl-[protein] + holo-[ACP] + H(+). It functions in the pathway protein modification; protein lipoylation via endogenous pathway; protein N(6)-(lipoyl)lysine from octanoyl-[acyl-carrier-protein]: step 1/2. Its function is as follows. Catalyzes the transfer of endogenously produced octanoic acid from octanoyl-acyl-carrier-protein onto the lipoyl domains of lipoate-dependent enzymes. Lipoyl-ACP can also act as a substrate although octanoyl-ACP is likely to be the physiological substrate. This chain is Octanoyltransferase, found in Tropheryma whipplei (strain Twist) (Whipple's bacillus).